Here is a 92-residue protein sequence, read N- to C-terminus: Defensin-like protein 226 (92 aa).

Residues 1–27 (MKCGVLFMISCLLITFLVLSHVREVES) form the signal peptide. 4 cysteine pairs are disulfide-bonded: Cys-33–Cys-92, Cys-43–Cys-71, Cys-51–Cys-86, and Cys-69–Cys-88.

This sequence belongs to the DEFL family.

The protein localises to the secreted. This is Defensin-like protein 226 (SCRL2) from Arabidopsis thaliana (Mouse-ear cress).